The primary structure comprises 66 residues: Large ribosomal subunit protein bL35 (66 aa).

A compositionally biased stretch (basic residues) spans M1–R16. Positions M1 to G21 are disordered.

It belongs to the bacterial ribosomal protein bL35 family.

In Streptococcus pneumoniae serotype 2 (strain D39 / NCTC 7466), this protein is Large ribosomal subunit protein bL35.